The primary structure comprises 93 residues: Acylphosphatase (93 aa).

The Acylphosphatase-like domain occupies 6 to 93 (RARIVVSGRV…GDLGAFEIRF (88 aa)). Catalysis depends on residues Arg-21 and Asn-39.

The protein belongs to the acylphosphatase family.

The enzyme catalyses an acyl phosphate + H2O = a carboxylate + phosphate + H(+). The polypeptide is Acylphosphatase (acyP) (Anaeromyxobacter dehalogenans (strain 2CP-C)).